The sequence spans 591 residues: MAERTHACGKVTVEAVGQTVQLKGWVQKRRDLGGLIFIDLRDRTGIVQVVFNPETSKEALEVAETIRSEYVLHVEGTVVERGEGAINDNMATGRIEVQATKVSVLNAAKTTPIIIADDTDASEDVRLKYRYLDLRRPVMFNTFKMRHDVTKTIRNFLDTEEFLEVETPILTKSTPEGARDYLVPSRVHDGEFYALPQSPQLFKQLLMVGGFERYYQVARCFRDEDLRADRQPEFTQIDIEASFLTQDEILDMMERMMTKVMKDAKGVEVSAPFPRMKYADAMARYGSDKPDTRFEMELTDLSEFAAGCGFKVFTSAVESGGQVKAINAKGAASKYSRKDIDALTEFVKVYGAKGLAWLKVEEDGLKGPIAKFFGEEDASVLKNTLEATAGDLLLFVADKKSVVADSLGALRLRLGKELELIDESKFNFLWVTDWPLLEYDEDADRYFAAHHPFTMPFREDVELLETAPEKARAQAYDLVLNGYELGGGSLRIYERDVQEKMFKALGFSQEEAQEQFGFLLEAFEYGTPPHGGIALGLDRLVMLLAGRTNLRDTIAFPKTASASCLLTEAPSPVAEAQLEELNLKLNVKEEK.

Glutamate 176 provides a ligand contact to L-aspartate. An aspartate region spans residues 200–203; the sequence is QLFK. Arginine 222 provides a ligand contact to L-aspartate. Residues 222–224 and glutamine 231 contribute to the ATP site; that span reads RDE. Histidine 450 is a binding site for L-aspartate. An ATP-binding site is contributed by glutamate 484. Arginine 491 contributes to the L-aspartate binding site. An ATP-binding site is contributed by 536–539; the sequence is GLDR.

Belongs to the class-II aminoacyl-tRNA synthetase family. Type 1 subfamily. In terms of assembly, homodimer.

The protein localises to the cytoplasm. It catalyses the reaction tRNA(Asx) + L-aspartate + ATP = L-aspartyl-tRNA(Asx) + AMP + diphosphate. Aspartyl-tRNA synthetase with relaxed tRNA specificity since it is able to aspartylate not only its cognate tRNA(Asp) but also tRNA(Asn). Reaction proceeds in two steps: L-aspartate is first activated by ATP to form Asp-AMP and then transferred to the acceptor end of tRNA(Asp/Asn). The chain is Aspartate--tRNA(Asp/Asn) ligase from Bacillus anthracis (strain CDC 684 / NRRL 3495).